Consider the following 283-residue polypeptide: Bifunctional protein FolD (283 aa).

Position 166 to 168 (166 to 168 (GAS)) interacts with NADP(+).

This sequence belongs to the tetrahydrofolate dehydrogenase/cyclohydrolase family. In terms of assembly, homodimer.

The enzyme catalyses (6R)-5,10-methylene-5,6,7,8-tetrahydrofolate + NADP(+) = (6R)-5,10-methenyltetrahydrofolate + NADPH. The catalysed reaction is (6R)-5,10-methenyltetrahydrofolate + H2O = (6R)-10-formyltetrahydrofolate + H(+). Its pathway is one-carbon metabolism; tetrahydrofolate interconversion. In terms of biological role, catalyzes the oxidation of 5,10-methylenetetrahydrofolate to 5,10-methenyltetrahydrofolate and then the hydrolysis of 5,10-methenyltetrahydrofolate to 10-formyltetrahydrofolate. This chain is Bifunctional protein FolD, found in Coxiella burnetii (strain CbuG_Q212) (Coxiella burnetii (strain Q212)).